Reading from the N-terminus, the 488-residue chain is GTPase Der (488 aa).

EngA-type G domains are found at residues 3–166 (PVVA…VSDG) and 201–374 (IKLA…QCAT). GTP-binding positions include 9–16 (GRPNVGKS), 56–60 (DTGGI), 118–121 (NKTD), 207–214 (GRPNVGKS), 254–258 (DTAGV), and 319–322 (NKWD). A KH-like domain is found at 375–459 (KRVSTALLTR…PIRIQFNEGA (85 aa)).

The protein belongs to the TRAFAC class TrmE-Era-EngA-EngB-Septin-like GTPase superfamily. EngA (Der) GTPase family. Associates with the 50S ribosomal subunit.

In terms of biological role, GTPase that plays an essential role in the late steps of ribosome biogenesis. This is GTPase Der from Sodalis glossinidius (strain morsitans).